The chain runs to 157 residues: Alanyl-tRNA editing protein AlaX-S (157 aa).

Residues H9, H13, C116, and H120 each coordinate Zn(2+).

Belongs to the class-II aminoacyl-tRNA synthetase family. Editing domain AlaX-S subfamily. As to quaternary structure, monomer and homodimer; the dimer is less active in tRNA editing and does not have a zinc ion associated with it. Another report shows only a monomeric form. Zn(2+) is required as a cofactor.

The protein resides in the cytoplasm. In terms of biological role, functions in trans to edit the amino acid moiety from mischarged charged Ser-tRNA(Ala). Has little activity against Gly-tRNA(Ala). The protein is Alanyl-tRNA editing protein AlaX-S (alaXS) of Pyrococcus horikoshii (strain ATCC 700860 / DSM 12428 / JCM 9974 / NBRC 100139 / OT-3).